An 84-amino-acid polypeptide reads, in one-letter code: Mu-conotoxin-like Cal 12.2b (84 aa).

Positions 1 to 19 are cleaved as a signal peptide; sequence MKLTCVLVVLLLVLPFGDL. Positions 20 to 42 are excised as a propeptide; that stretch reads ITTSNTEDNKRGATPWQNSLKAR. Intrachain disulfides connect cysteine 45-cysteine 57, cysteine 52-cysteine 65, cysteine 59-cysteine 70, and cysteine 64-cysteine 76. Tryptophan 72 carries the post-translational modification 6'-bromotryptophan. Proline 77 carries the 4-hydroxyproline modification. Tryptophan 81 carries the post-translational modification 6'-bromotryptophan.

It belongs to the conotoxin O1 superfamily. In terms of tissue distribution, expressed by the venom duct.

It is found in the secreted. Mu-conotoxins block voltage-gated sodium channels. This toxin reversibly blocks voltage-gated sodium channel in cephalopods, with no alteration in the voltage dependence of sodium conductance or on the kinetics of inactivation. This Californiconus californicus (California cone) protein is Mu-conotoxin-like Cal 12.2b.